Reading from the N-terminus, the 496-residue chain is Latent membrane protein 2 (496 aa).

The disordered stretch occupies residues 1 to 108 (MGSLEMVPMG…PPYSPRDDSS (108 aa)). At 1-123 (MGSLEMVPMG…EAGRGSMNPV (123 aa)) the chain is on the cytoplasmic side. Positions 27–41 (NNSQYPSASGSSGNT) are enriched in polar residues. A PPxY motif motif is present at residues 97 to 101 (PPPPY). Tyrosine 112 is modified (phosphotyrosine; by host). A helical transmembrane segment spans residues 124 to 144 (CLPVIVAPYLFWLAAIAASCF). Over 145–147 (TAS) the chain is Extracellular. The helical transmembrane segment at 148–168 (VSTVVTATGLALSLLLLAAVA) threads the bilayer. Over 169–177 (SSYAAAQRK) the chain is Cytoplasmic. Residues 178–197 (LLTPVTVLTAVVFFAICLTW) traverse the membrane as a helical segment. Residues 198-210 (RIEDPPFNSLLFA) lie on the Extracellular side of the membrane. A helical membrane pass occupies residues 211-231 (LLAAAGGLQGIYVLVMLVLLI). The Cytoplasmic portion of the chain corresponds to 232-240 (LAYRRRWRR). Residues 241–261 (LTVCGGIMFLACVLVLIVDAV) traverse the membrane as a helical segment. The Extracellular portion of the chain corresponds to 262 to 266 (LQLSP). Residues 267–287 (LLGAVTVVSMTLLLLAFVLWL) form a helical membrane-spanning segment. Topologically, residues 288–295 (SSPGGLGT) are cytoplasmic. Residues 296-316 (LGAALLTLAAALALLASLILG) traverse the membrane as a helical segment. Position 317 (threonine 317) is a topological domain, extracellular. The helical transmembrane segment at 318 to 338 (LNLTTMFLLMLLWTLVVLLIC) threads the bilayer. At 339-353 (SSCSSCPLTKILLAR) the chain is on the cytoplasmic side. The chain crosses the membrane as a helical span at residues 354–374 (LFLYALALLLLASALIAGGSI). The Extracellular portion of the chain corresponds to 375–387 (LQTNFKSLSSTEF). The chain crosses the membrane as a helical span at residues 388-408 (IPNLFCMLLLIVAGILFILAI). The Cytoplasmic segment spans residues 409 to 421 (LTEWGSGNRTYGP). Residues 422–442 (VFMCLGGLLTMVAGAVWLTVM) form a helical membrane-spanning segment. Topologically, residues 443–448 (TNTLLS) are extracellular. The helical transmembrane segment at 449–469 (AWILTAGFLIFLIGFALFGVI) threads the bilayer. At 470 to 496 (RCCRYCCYYCLTLESEERPPTPYRNTV) the chain is on the cytoplasmic side.

The protein belongs to the herpesviridae LMP-2 family. In terms of assembly, the cytoplasmic N-terminal domain interacts with human SRC family protein tyrosine kinases SYK and LYN. Binds human ITCH, WWP2 and NEDD4L. Post-translationally, phosphorylated on cytoplasmic N-terminal tyrosine residues, possibly by human LYN. Can be ubiquitinated by human ITCH and WWP2 on the N-terminus in a lysine-independent manner.

The protein localises to the host cell membrane. It localises to the host endomembrane system. Its subcellular location is the host cytoplasm. It is found in the host perinuclear region. Maintains EBV latent infection of B-lymphocyte, by preventing lytic reactivation of the virus in response to surface immunoglobulin (sIg) cross-linking. Acts like a dominant negative inhibitor of the sIg-associated protein tyrosine kinases, LYN and SYK. Also blocks translocation of the B-cell antigen receptor (BCR) into lipid rafts, preventing the subsequent signaling and accelerated internalization of the BCR upon BCR cross-linking. Serves as a molecular scaffold to recruit SYK, LYN and E3 protein-ubiquitin ligases, such as ITCH and NEDD4L, leading to ubiquitination and potential degradation of both tyrosines kinases. Possesses a constitutive signaling activity in non-transformed cells, inducing bypass of normal B lymphocyte developmental checkpoints allowing immunoglobulin-negative cells to colonize peripheral lymphoid organs. Functionally, may be a negative regulator of isoform LMP2A. The sequence is that of Latent membrane protein 2 (LMP2) from Homo sapiens (Human).